The sequence spans 526 residues: Probable feruloyl esterase B-1 (526 aa).

An N-terminal signal peptide occupies residues 1–19; it reads MPSLRRLLPFLAAGSAALA. 2 disulfide bridges follow: C28/C75 and C63/C114. N53, N85, N98, and N138 each carry an N-linked (GlcNAc...) asparagine glycan. Cystine bridges form between C187–C441, C256–C273, and C282–C291. The Acyl-ester intermediate role is filled by S188. N246 is a glycosylation site (N-linked (GlcNAc...) asparagine). Ca(2+) is bound by residues D257, D260, A262, D264, and I266. N-linked (GlcNAc...) asparagine glycosylation is found at N287 and N311. Residues D400 and H440 each act as charge relay system in the active site. N-linked (GlcNAc...) asparagine glycosylation is found at N490 and N516. C503 and C525 are disulfide-bonded.

The protein belongs to the tannase family.

It localises to the secreted. The catalysed reaction is feruloyl-polysaccharide + H2O = ferulate + polysaccharide.. In terms of biological role, involved in degradation of plant cell walls. Hydrolyzes the feruloyl-arabinose ester bond in arabinoxylans as well as the feruloyl-galactose and feruloyl-arabinose ester bonds in pectin. The sequence is that of Probable feruloyl esterase B-1 (faeB-1) from Aspergillus flavus (strain ATCC 200026 / FGSC A1120 / IAM 13836 / NRRL 3357 / JCM 12722 / SRRC 167).